Consider the following 167-residue polypeptide: Photosystem I assembly protein Ycf3 (167 aa).

3 TPR repeats span residues 35 to 68, 72 to 105, and 120 to 153; these read AFTYYREGMSAQSEGEYAEALQNYYEAMRLEVDA, SYIFYNIGLIHTSNGEHARALEYYYQALERNPSL, and GEQAIENGQAEISKMLFDKAADYWKEAIRLAPTN.

Belongs to the Ycf3 family.

The protein resides in the plastid. It localises to the chloroplast thylakoid membrane. Functionally, essential for the assembly of the photosystem I (PSI) complex. May act as a chaperone-like factor to guide the assembly of the PSI subunits. This is Photosystem I assembly protein Ycf3 from Pleurastrum terricola (Filamentous green alga).